A 198-amino-acid chain; its full sequence is Endonuclease V (198 aa).

2 residues coordinate Mg(2+): Asp-38 and Asp-101.

It belongs to the endonuclease V family. Requires Mg(2+) as cofactor.

Its subcellular location is the cytoplasm. The catalysed reaction is Endonucleolytic cleavage at apurinic or apyrimidinic sites to products with a 5'-phosphate.. Its function is as follows. DNA repair enzyme involved in the repair of deaminated bases. Selectively cleaves double-stranded DNA at the second phosphodiester bond 3' to a deoxyinosine leaving behind the intact lesion on the nicked DNA. The protein is Endonuclease V of Saccharolobus islandicus (strain M.16.4 / Kamchatka #3) (Sulfolobus islandicus).